Consider the following 566-residue polypeptide: Proline--tRNA ligase (566 aa).

Belongs to the class-II aminoacyl-tRNA synthetase family. ProS type 1 subfamily. In terms of assembly, homodimer.

It localises to the cytoplasm. It catalyses the reaction tRNA(Pro) + L-proline + ATP = L-prolyl-tRNA(Pro) + AMP + diphosphate. Functionally, catalyzes the attachment of proline to tRNA(Pro) in a two-step reaction: proline is first activated by ATP to form Pro-AMP and then transferred to the acceptor end of tRNA(Pro). As ProRS can inadvertently accommodate and process non-cognate amino acids such as alanine and cysteine, to avoid such errors it has two additional distinct editing activities against alanine. One activity is designated as 'pretransfer' editing and involves the tRNA(Pro)-independent hydrolysis of activated Ala-AMP. The other activity is designated 'posttransfer' editing and involves deacylation of mischarged Ala-tRNA(Pro). The misacylated Cys-tRNA(Pro) is not edited by ProRS. The sequence is that of Proline--tRNA ligase from Staphylococcus saprophyticus subsp. saprophyticus (strain ATCC 15305 / DSM 20229 / NCIMB 8711 / NCTC 7292 / S-41).